A 205-amino-acid chain; its full sequence is Alpha-1-acid glycoprotein (205 aa).

The N-terminal stretch at 1–18 is a signal peptide; sequence MALHMVLVVLSLLPLLEA. 6 N-linked (GlcNAc...) asparagine glycosylation sites follow: Asn25, Asn34, Asn76, Asn94, Asn104, and Asn134. An intrachain disulfide couples Cys91 to Cys183.

Belongs to the calycin superfamily. Lipocalin family.

The protein localises to the secreted. Its function is as follows. Functions as a transport protein in the blood stream. Binds various ligands in the interior of its beta-barrel domain. Appears to function in modulating the activity of the immune system during the acute-phase reaction. This Rattus norvegicus (Rat) protein is Alpha-1-acid glycoprotein (Orm1).